A 374-amino-acid chain; its full sequence is 3-isopropylmalate dehydrogenase (374 aa).

83–96 (GPKWDNLPPEIRPE) lines the NAD(+) pocket. Arginine 104, arginine 114, arginine 142, and aspartate 231 together coordinate substrate. Aspartate 231, aspartate 255, and aspartate 259 together coordinate Mg(2+). Residue 288 to 300 (GSAPDIAGQNKAN) participates in NAD(+) binding.

Belongs to the isocitrate and isopropylmalate dehydrogenases family. LeuB type 1 subfamily. In terms of assembly, homodimer. The cofactor is Mg(2+). Mn(2+) is required as a cofactor.

It is found in the cytoplasm. The enzyme catalyses (2R,3S)-3-isopropylmalate + NAD(+) = 4-methyl-2-oxopentanoate + CO2 + NADH. It participates in amino-acid biosynthesis; L-leucine biosynthesis; L-leucine from 3-methyl-2-oxobutanoate: step 3/4. Functionally, catalyzes the oxidation of 3-carboxy-2-hydroxy-4-methylpentanoate (3-isopropylmalate) to 3-carboxy-4-methyl-2-oxopentanoate. The product decarboxylates to 4-methyl-2 oxopentanoate. This Carboxydothermus hydrogenoformans (strain ATCC BAA-161 / DSM 6008 / Z-2901) protein is 3-isopropylmalate dehydrogenase.